The following is a 1302-amino-acid chain: Neuroglian (1302 aa).

The first 23 residues, 1–23, serve as a signal peptide directing secretion; that stretch reads MWRQSTILAALLVALLCAGSAES. Residues 24-1138 lie on the Extracellular side of the membrane; it reads KGNRPPRITK…ANAGWFIGMM (1115 aa). Ig-like C2-type domains are found at residues 29 to 133, 134 to 225, 245 to 330, 339 to 426, 432 to 524, and 521 to 610; these read PRIT…AELN, AFKD…YKIG, PPVR…QSFS, PYFT…VYLN, PTIS…TRIT, and TRIT…ANLI. Intrachain disulfides connect Cys-59/Cys-111, Cys-155/Cys-212, Cys-268/Cys-317, and Cys-360/Cys-410. 2 N-linked (GlcNAc...) asparagine glycosylation sites follow: Asn-182 and Asn-198. N-linked (GlcNAc...) asparagine glycosylation is found at Asn-411 and Asn-448. Fibronectin type-III domains are found at residues 614–711, 716–813, 818–915, 916–1017, and 1021–1119; these read VPNA…TQPD, NPDN…SGED, APTN…TPEG, VPSP…LKDA, and APAT…TVEG. Cys-625 and Cys-706 are oxidised to a cystine. 2 N-linked (GlcNAc...) asparagine glycosylation sites follow: Asn-652 and Asn-683. The N-linked (GlcNAc...) asparagine glycan is linked to Asn-821. An N-linked (GlcNAc...) asparagine glycan is attached at Asn-1125. The helical transmembrane segment at 1139-1154 threads the bilayer; sequence LALAFIIILFIIICII. At 1155 to 1302 the chain is on the cytoplasmic side; that stretch reads RRNRGGKYDV…AAAGAVATYV (148 aa). Residues 1172–1182 show a composition bias toward basic and acidic residues; that stretch reads GRRDYPEEGGF. Disordered stretches follow at residues 1172–1223 and 1236–1291; these read GRRD…GDTG and VPGK…ASNG. Over residues 1188–1203 the composition is skewed to polar residues; that stretch reads PLDNKSAGRQSVSSAN. The span at 1253-1275 shows a compositional bias: low complexity; that stretch reads AAAHQAAPTAGGSGAAGSAAAAG.

In terms of assembly, forms a complex with Nrx-IV/Nrx and Cont. Forms a complex composed of septate junction proteins Nrx-IV/Nrx, Tsf2/MTf, Cont and Nrg during late embryogenesis. In terms of tissue distribution, restricted to the surface of neurons and glia in the developing nervous system. Restricted to non-neuronal tissues.

Its subcellular location is the cell membrane. It is found in the cell junction. The protein resides in the septate junction. Functionally, essential for septate junctions. Septate junctions, which are the equivalent of vertebrate tight junctions, are characterized by regular arrays of transverse structures that span the intermembrane space and form a physical barrier to diffusion. Required for formation of the hemolymph-brain barrier (the insect blood-brain barrier). Vital for embryonic development. Involved in the targeting for degradation or recycling of certain septate junction components, including kune and bou/boudin, by regulating their endocytosis. Its function is as follows. May play a role in neural and glial cell adhesion in the developing embryo. In terms of biological role, may be a more general cell adhesion molecule involved in non-neuronal tissues and imaginal disk morphogenesis. This is Neuroglian (Nrg) from Drosophila melanogaster (Fruit fly).